Reading from the N-terminus, the 426-residue chain is Cell cycle checkpoint control protein RAD9B (426 aa).

Serine 359 is modified (phosphoserine).

This sequence belongs to the rad9 family. Interacts with HUS1, HUS1B, RAD1, RAD9A and RAD17. In terms of tissue distribution, expressed in testis and skeletal muscle.

The sequence is that of Cell cycle checkpoint control protein RAD9B (RAD9B) from Homo sapiens (Human).